The following is a 101-amino-acid chain: Urease subunit beta (101 aa).

Belongs to the urease beta subunit family. Heterotrimer of UreA (gamma), UreB (beta) and UreC (alpha) subunits. Three heterotrimers associate to form the active enzyme.

The protein resides in the cytoplasm. It carries out the reaction urea + 2 H2O + H(+) = hydrogencarbonate + 2 NH4(+). Its pathway is nitrogen metabolism; urea degradation; CO(2) and NH(3) from urea (urease route): step 1/1. The sequence is that of Urease subunit beta from Burkholderia multivorans (strain ATCC 17616 / 249).